The following is a 632-amino-acid chain: Extracellular metalloproteinase 2 (632 aa).

A signal peptide spans 1-19; sequence MHGLLLAGLAAALPLGVAG. Residues 20–244 constitute a propeptide that is removed on maturation; sequence LPARQQSGLS…VHNVVDYVAS (225 aa). An N-linked (GlcNAc...) asparagine glycan is attached at asparagine 270. Histidine 429 provides a ligand contact to Zn(2+). The active site involves glutamate 430. Position 433 (histidine 433) interacts with Zn(2+).

It belongs to the peptidase M36 family. It depends on Zn(2+) as a cofactor.

It is found in the secreted. Its function is as follows. Secreted metalloproteinase probably acting as a virulence factor. This chain is Extracellular metalloproteinase 2 (MEP2), found in Arthroderma benhamiae (Trichophyton mentagrophytes).